The sequence spans 319 residues: Acetyl-coenzyme A carboxylase carboxyl transferase subunit alpha (319 aa).

The region spanning 35–296 is the CoA carboxyltransferase C-terminal domain; that stretch reads NIDEEVHRLR…KAQLLEDLAD (262 aa).

It belongs to the AccA family. Acetyl-CoA carboxylase is a heterohexamer composed of biotin carboxyl carrier protein (AccB), biotin carboxylase (AccC) and two subunits each of ACCase subunit alpha (AccA) and ACCase subunit beta (AccD).

Its subcellular location is the cytoplasm. It carries out the reaction N(6)-carboxybiotinyl-L-lysyl-[protein] + acetyl-CoA = N(6)-biotinyl-L-lysyl-[protein] + malonyl-CoA. It functions in the pathway lipid metabolism; malonyl-CoA biosynthesis; malonyl-CoA from acetyl-CoA: step 1/1. Its function is as follows. Component of the acetyl coenzyme A carboxylase (ACC) complex. First, biotin carboxylase catalyzes the carboxylation of biotin on its carrier protein (BCCP) and then the CO(2) group is transferred by the carboxyltransferase to acetyl-CoA to form malonyl-CoA. The protein is Acetyl-coenzyme A carboxylase carboxyl transferase subunit alpha of Salmonella paratyphi C (strain RKS4594).